A 200-amino-acid chain; its full sequence is Dipicolinate synthase subunit B (200 aa).

As to quaternary structure, dipicolinate synthase likely consists of DpaA and DpaB, since both proteins are required for DPA synthesis.

The catalysed reaction is (S)-2,3-dihydrodipicolinate + NADP(+) = dipicolinate + NADPH + H(+). Functionally, together with DpaA, catalyzes the conversion of dihydrodipicolinate to dipicolinate (DPA), which constitutes up to 10% of the dry weight of the spore. The protein is Dipicolinate synthase subunit B (dpaB) of Bacillus subtilis (strain 168).